Reading from the N-terminus, the 230-residue chain is uncharacterized protein (230 aa).

This is an uncharacterized protein from Sinorhizobium fredii (strain NBRC 101917 / NGR234).